Here is a 316-residue protein sequence, read N- to C-terminus: 4-hydroxy-3-methylbut-2-enyl diphosphate reductase (316 aa).

Residue cysteine 12 coordinates [4Fe-4S] cluster. Residues histidine 41 and histidine 74 each contribute to the (2E)-4-hydroxy-3-methylbut-2-enyl diphosphate site. Residues histidine 41 and histidine 74 each coordinate dimethylallyl diphosphate. Histidine 41 and histidine 74 together coordinate isopentenyl diphosphate. Cysteine 96 is a [4Fe-4S] cluster binding site. Histidine 124 is a (2E)-4-hydroxy-3-methylbut-2-enyl diphosphate binding site. Position 124 (histidine 124) interacts with dimethylallyl diphosphate. An isopentenyl diphosphate-binding site is contributed by histidine 124. Glutamate 126 serves as the catalytic Proton donor. Threonine 168 is a (2E)-4-hydroxy-3-methylbut-2-enyl diphosphate binding site. Cysteine 198 is a [4Fe-4S] cluster binding site. (2E)-4-hydroxy-3-methylbut-2-enyl diphosphate is bound by residues serine 226, serine 227, asparagine 228, and serine 270. Positions 226, 227, 228, and 270 each coordinate dimethylallyl diphosphate. Residues serine 226, serine 227, asparagine 228, and serine 270 each contribute to the isopentenyl diphosphate site.

This sequence belongs to the IspH family. [4Fe-4S] cluster serves as cofactor.

It catalyses the reaction isopentenyl diphosphate + 2 oxidized [2Fe-2S]-[ferredoxin] + H2O = (2E)-4-hydroxy-3-methylbut-2-enyl diphosphate + 2 reduced [2Fe-2S]-[ferredoxin] + 2 H(+). The enzyme catalyses dimethylallyl diphosphate + 2 oxidized [2Fe-2S]-[ferredoxin] + H2O = (2E)-4-hydroxy-3-methylbut-2-enyl diphosphate + 2 reduced [2Fe-2S]-[ferredoxin] + 2 H(+). The protein operates within isoprenoid biosynthesis; dimethylallyl diphosphate biosynthesis; dimethylallyl diphosphate from (2E)-4-hydroxy-3-methylbutenyl diphosphate: step 1/1. Its pathway is isoprenoid biosynthesis; isopentenyl diphosphate biosynthesis via DXP pathway; isopentenyl diphosphate from 1-deoxy-D-xylulose 5-phosphate: step 6/6. Catalyzes the conversion of 1-hydroxy-2-methyl-2-(E)-butenyl 4-diphosphate (HMBPP) into a mixture of isopentenyl diphosphate (IPP) and dimethylallyl diphosphate (DMAPP). Acts in the terminal step of the DOXP/MEP pathway for isoprenoid precursor biosynthesis. In Acinetobacter baylyi (strain ATCC 33305 / BD413 / ADP1), this protein is 4-hydroxy-3-methylbut-2-enyl diphosphate reductase.